The following is a 471-amino-acid chain: Putative multidrug resistance protein MdtD (471 aa).

The Periplasmic portion of the chain corresponds to 1 to 11 (MTDLPDNTRWQ). The chain crosses the membrane as a helical span at residues 12-32 (LWIVAFGFFMQSLDTTIVNTA). Over 33–48 (LPSMAQSLGESPLHMH) the chain is Cytoplasmic. A helical transmembrane segment spans residues 49 to 69 (MVIVSYVLTVAVMLPASGWLA). The Periplasmic segment spans residues 70–76 (DKVGVRN). The chain crosses the membrane as a helical span at residues 77–97 (IFFTAIVLFTLGSLFCALSGT). Over 98 to 101 (LNEL) the chain is Cytoplasmic. A helical transmembrane segment spans residues 102 to 124 (LLARALQGVGGAMMVPVGRLTVM). Residues 125-137 (KIVPREQYMAAMT) lie on the Periplasmic side of the membrane. Residues 138 to 158 (FVTLPGQVGPLLGPALGGLLV) form a helical membrane-spanning segment. The Cytoplasmic portion of the chain corresponds to 159–164 (EYASWH). A helical membrane pass occupies residues 165 to 185 (WIFLINIPVGIIGAIATLMLM). The Periplasmic segment spans residues 186–196 (PNYTMQTRRFD). The helical transmembrane segment at 197–217 (LSGFLLLAIGMAVLTLALDGS) threads the bilayer. Topologically, residues 218 to 224 (KGTGLSP) are cytoplasmic. A helical transmembrane segment spans residues 225–245 (LAITGLVAVGVVALVLYLLHA). The Periplasmic segment spans residues 246 to 262 (RNNNRALFSLKLFRTRT). Residues 263 to 283 (FSLGLAGSFAGRIGSGMLPFM) traverse the membrane as a helical segment. The Cytoplasmic portion of the chain corresponds to 284–285 (TP). A helical membrane pass occupies residues 286–306 (VFLQIGLGFSPFHAGLMMIPM). At 307-341 (VLGSMGMKRIVVQVVNRFGYRRVLVATTLGLSLVT) the chain is on the periplasmic side. The chain crosses the membrane as a helical span at residues 342–362 (LLFMTTALLGWYYVLPFVLFL). The Cytoplasmic segment spans residues 363 to 395 (QGMVNSTRFSSMNTLTLKDLPDNLASSGNSLLS). The chain crosses the membrane as a helical span at residues 396–416 (MIMQLSMSIGVTIAGLLLGLF). Over 417 to 430 (GSQHVSVDSGTTQT) the chain is Periplasmic. A helical membrane pass occupies residues 431–451 (VFMYTWLSMAFIIALPAFIFA). Residues 452–471 (RVPNDTHQNVAISRRKRSAQ) are Cytoplasmic-facing.

This sequence belongs to the major facilitator superfamily. TCR/Tet family.

The protein resides in the cell inner membrane. The polypeptide is Putative multidrug resistance protein MdtD (Escherichia coli O17:K52:H18 (strain UMN026 / ExPEC)).